Reading from the N-terminus, the 101-residue chain is ATP-dependent Clp protease adapter protein ClpS 2 (101 aa).

It belongs to the ClpS family. As to quaternary structure, binds to the N-terminal domain of the chaperone ClpA.

Functionally, involved in the modulation of the specificity of the ClpAP-mediated ATP-dependent protein degradation. In Rhizobium meliloti (strain 1021) (Ensifer meliloti), this protein is ATP-dependent Clp protease adapter protein ClpS 2.